Consider the following 773-residue polypeptide: Lon protease homolog 2, peroxisomal (773 aa).

The region spanning 9–198 (LPVILVTSGV…MCIKWMNEKK (190 aa)) is the Lon N-terminal domain. Position 336–343 (336–343 (GPPGIGKT)) interacts with ATP. Residues 587 to 766 (PLPAGVCFGL…EDVIGAMMDK (180 aa)) enclose the Lon proteolytic domain. Active-site residues include S672 and K715. The Microbody targeting signal motif lies at 771–773 (AKL).

It belongs to the peptidase S16 family.

It localises to the peroxisome matrix. The enzyme catalyses Hydrolysis of proteins in presence of ATP.. Functionally, ATP-dependent serine protease that mediates the selective degradation of misfolded and unassembled polypeptides in the peroxisomal matrix. Necessary for type 2 peroxisome targeting signal (PTS2)-containing protein processing and facilitates peroxisome matrix protein import. The sequence is that of Lon protease homolog 2, peroxisomal from Caenorhabditis elegans.